The sequence spans 252 residues: Imidazole glycerol phosphate synthase subunit HisF (252 aa).

Residues D11 and D130 contribute to the active site.

The protein belongs to the HisA/HisF family. As to quaternary structure, heterodimer of HisH and HisF.

The protein localises to the cytoplasm. The enzyme catalyses 5-[(5-phospho-1-deoxy-D-ribulos-1-ylimino)methylamino]-1-(5-phospho-beta-D-ribosyl)imidazole-4-carboxamide + L-glutamine = D-erythro-1-(imidazol-4-yl)glycerol 3-phosphate + 5-amino-1-(5-phospho-beta-D-ribosyl)imidazole-4-carboxamide + L-glutamate + H(+). Its pathway is amino-acid biosynthesis; L-histidine biosynthesis; L-histidine from 5-phospho-alpha-D-ribose 1-diphosphate: step 5/9. In terms of biological role, IGPS catalyzes the conversion of PRFAR and glutamine to IGP, AICAR and glutamate. The HisF subunit catalyzes the cyclization activity that produces IGP and AICAR from PRFAR using the ammonia provided by the HisH subunit. The chain is Imidazole glycerol phosphate synthase subunit HisF from Geobacillus sp. (strain WCH70).